A 150-amino-acid polypeptide reads, in one-letter code: Ribonuclease P protein subunit p21 (150 aa).

Alanine 2 is subject to N-acetylalanine. Positions 62, 65, 92, and 95 each coordinate Zn(2+). The interval 121 to 150 is disordered; sequence QADINPSEPLPNIADLPKENIQTQALNTSE. Positions 140–150 are enriched in polar residues; sequence NIQTQALNTSE.

This sequence belongs to the eukaryotic/archaeal RNase P protein component 4 family. In terms of assembly, RNase P consists of a catalytic RNA moiety and about 10 protein subunits; POP1, POP4, POP5, POP7, RPP14, RPP21, RPP25, RPP30, RPP38 and RPP40. Within the RNase P complex, POP1, POP7 and RPP25 form the 'finger' subcomplex, POP5, RPP14, RPP40 and homodimeric RPP30 form the 'palm' subcomplex, and RPP21, POP4 and RPP38 form the 'wrist' subcomplex. All subunits of the RNase P complex interact with the catalytic RNA.

It localises to the nucleus. It is found in the nucleolus. Component of ribonuclease P, a ribonucleoprotein complex that generates mature tRNA molecules by cleaving their 5'-ends. This is Ribonuclease P protein subunit p21 (Rpp21) from Mus musculus (Mouse).